The primary structure comprises 267 residues: Hydroxyethylthiazole kinase (267 aa).

Residue Met-46 coordinates substrate. Positions 121 and 167 each coordinate ATP. Ala-194 provides a ligand contact to substrate.

This sequence belongs to the Thz kinase family. It depends on Mg(2+) as a cofactor.

It catalyses the reaction 5-(2-hydroxyethyl)-4-methylthiazole + ATP = 4-methyl-5-(2-phosphooxyethyl)-thiazole + ADP + H(+). It functions in the pathway cofactor biosynthesis; thiamine diphosphate biosynthesis; 4-methyl-5-(2-phosphoethyl)-thiazole from 5-(2-hydroxyethyl)-4-methylthiazole: step 1/1. Its function is as follows. Catalyzes the phosphorylation of the hydroxyl group of 4-methyl-5-beta-hydroxyethylthiazole (THZ). This is Hydroxyethylthiazole kinase from Rhizobium johnstonii (strain DSM 114642 / LMG 32736 / 3841) (Rhizobium leguminosarum bv. viciae).